Reading from the N-terminus, the 193-residue chain is Acyl carrier protein phosphodiesterase (193 aa).

This sequence belongs to the AcpH family.

The enzyme catalyses holo-[ACP] + H2O = apo-[ACP] + (R)-4'-phosphopantetheine + H(+). Its function is as follows. Converts holo-ACP to apo-ACP by hydrolytic cleavage of the phosphopantetheine prosthetic group from ACP. The polypeptide is Acyl carrier protein phosphodiesterase (Klebsiella pneumoniae subsp. pneumoniae (strain ATCC 700721 / MGH 78578)).